Here is a 309-residue protein sequence, read N- to C-terminus: Assembly-complementing factor 4 (309 aa).

3 disordered regions span residues 1-80 (MSED…ASPI), 164-240 (KSIN…ENTP), and 286-309 (VRSE…LFKR). Composition is skewed to basic and acidic residues over residues 13-24 (ELHKLSIVDKHS) and 34-44 (KQHEVQPESKS). A phosphoserine mark is found at Ser-44, Ser-71, Ser-74, Ser-78, and Ser-165. Positions 61–80 (SSPQRSTTNQSPVSDHASPI) are enriched in polar residues. Composition is skewed to low complexity over residues 174–188 (NNNV…LPNR), 205–214 (PSRSSESTPT), and 222–239 (PRNT…GENT). The span at 287–298 (RSEDEDDEEFEP) shows a compositional bias: acidic residues. At Ser-288 the chain carries Phosphoserine.

Its function is as follows. May be involved in actin cytoskeleton organization and biogenesis. This chain is Assembly-complementing factor 4 (ACF4), found in Saccharomyces cerevisiae (strain ATCC 204508 / S288c) (Baker's yeast).